The primary structure comprises 268 residues: L-aspartate dehydrogenase (268 aa).

Positions 125 and 191 each coordinate NAD(+). The active site involves His221.

It belongs to the L-aspartate dehydrogenase family.

The enzyme catalyses L-aspartate + NADP(+) + H2O = oxaloacetate + NH4(+) + NADPH + H(+). The catalysed reaction is L-aspartate + NAD(+) + H2O = oxaloacetate + NH4(+) + NADH + H(+). It functions in the pathway cofactor biosynthesis; NAD(+) biosynthesis; iminoaspartate from L-aspartate (dehydrogenase route): step 1/1. Functionally, specifically catalyzes the NAD or NADP-dependent dehydrogenation of L-aspartate to iminoaspartate. This is L-aspartate dehydrogenase from Brucella anthropi (strain ATCC 49188 / DSM 6882 / CCUG 24695 / JCM 21032 / LMG 3331 / NBRC 15819 / NCTC 12168 / Alc 37) (Ochrobactrum anthropi).